Here is a 715-residue protein sequence, read N- to C-terminus: Protein MTSS 2 (715 aa).

In terms of domain architecture, IMD spans 1 to 249; sequence METAEKECGA…EQVIKDLKGS (249 aa). The stretch at 134-156 forms a coiled coil; the sequence is HEIKKKSSDTLKLQKKARKGKGD. 3 stretches are compositionally biased toward low complexity: residues 253–274, 284–295, and 312–330; these read WSYQTPPSSPSSSNSRKSSMCS, SSVSSHDSGFVS, and TSQKSSSSASSEASETCQS. 3 disordered regions span residues 253-405, 420-485, and 527-562; these read WSYQ…EVSP, LEHQ…RNSN, and IRRTPSTKPTVRRALSSAGPIPIRPPIVPVKTPTVP. Threonine 257 is modified (phosphothreonine). Serine 261 carries the phosphoserine modification. Over residues 331–341 the composition is skewed to polar residues; it reads VSECSSPTSDW. The span at 360–369 shows a compositional bias: basic and acidic residues; sequence DRVEHLRDTE. Serine 404 carries the phosphoserine modification. Residues 429–442 show a composition bias toward low complexity; the sequence is SLQYSSGYSTQTTT. Positions 443 to 455 are enriched in polar residues; that stretch reads PSCSEDTIPSQGS. Phosphoserine occurs at positions 542, 564, 575, 587, 597, and 602. Threonine 606 is modified (phosphothreonine). The tract at residues 661-690 is disordered; that stretch reads FPFPTALSATPSEETPTPPPAATSDPPAED. The WH2 domain occupies 687 to 704; sequence PAEDMLVAIRRGVRLRRT.

It belongs to the MTSS family. Interacts (via IMD domain) with RAC1; this interaction may be important to potentiate PDGF-induced RAC1 activation.

It localises to the cytoplasm. It is found in the cell projection. The protein localises to the ruffle. Functionally, involved in plasma membrane dynamics. Potentiated PDGF-mediated formation of membrane ruffles and lamellipodia in fibroblasts, acting via RAC1 activation. May function in actin bundling. This Mus musculus (Mouse) protein is Protein MTSS 2 (Mtss2).